Reading from the N-terminus, the 345-residue chain is Nuclear distribution protein nudE-like 1-A (345 aa).

The stretch at 19–190 (WRELSKRLKQ…LAVRERQTDG (172 aa)) forms a coiled coil. A compositionally biased stretch (basic and acidic residues) spans 182 to 192 (AVRERQTDGTR). Disordered regions lie at residues 182-206 (AVRE…CDKT) and 326-345 (PPGV…PLSV). Residues 334-345 (PPSPPGMLPLSV) show a composition bias toward pro residues.

The protein belongs to the nudE family. Post-translationally, phosphorylated in mitosis.

Its subcellular location is the cytoplasm. It is found in the cytoskeleton. The protein localises to the microtubule organizing center. The protein resides in the centrosome. It localises to the spindle. Required for organization of the cellular microtubule array and microtubule anchoring at the centrosome. Positively regulates the activity of the minus-end directed microtubule motor protein dynein. May enhance dynein-mediated microtubule sliding by targeting dynein to the microtubule plus end. Positively regulates lysosome peripheral distribution and ruffled border formation in osteoclasts. The sequence is that of Nuclear distribution protein nudE-like 1-A (ndel1-a) from Xenopus laevis (African clawed frog).